A 379-amino-acid chain; its full sequence is Zinc metalloproteinase nas-20 (379 aa).

The signal sequence occupies residues 1–20 (MKITVNFLLVALIGVPSVLS). A propeptide spanning residues 21–29 (DRHITRDKR) is cleaved from the precursor. Residues 30-208 (QAMRDYAKWE…VLLNKFYGCN (179 aa)) enclose the Peptidase M12A domain. N67 carries an N-linked (GlcNAc...) asparagine glycan. Cystine bridges form between C70–C207, C91–C111, C209–C229, and C234–C243. H119 is a Zn(2+) binding site. E120 is an active-site residue. Zn(2+) contacts are provided by H123 and H129. N185 is a glycosylation site (N-linked (GlcNAc...) asparagine). An EGF-like domain is found at 203-244 (KFYGCNCDNHPRKLDCKNGGYQNPANCEECLCTDGFNGQLCD). N-linked (GlcNAc...) asparagine glycosylation is found at N337 and N370.

Zn(2+) is required as a cofactor.

Its subcellular location is the secreted. Metalloprotease. The chain is Zinc metalloproteinase nas-20 (nas-20) from Caenorhabditis elegans.